Reading from the N-terminus, the 473-residue chain is H(+)/Cl(-) exchange transporter ClcA (473 aa).

The Cytoplasmic segment spans residues 1 to 32 (MKTDTPSLETPQAARLRRRQLIRQLLERDKTP). A helical membrane pass occupies residues 33–69 (LAILFMAAVVGTLVGLAAVAFDKGVAWLQNQRMGALV). The Periplasmic portion of the chain corresponds to 70-76 (HTADNYP). A helical membrane pass occupies residues 77–100 (LLLTVAFLCSAVLAMFGYFLVRKY). The Selectivity filter part_1 signature appears at 106-110 (GSGIP). Position 107 (Ser-107) interacts with chloride. Positions 109-116 (IPEIEGAL) form an intramembrane region, helical. Residues 117–123 (EDQRPVR) are Cytoplasmic-facing. The next 2 helical transmembrane spans lie at 124–141 (WWRV…TLGG) and 148–166 (EGPT…LDIF). A Selectivity filter part_2 motif is present at residues 146 to 150 (GREGP). At 167–176 (RLKGDEARHT) the chain is on the cytoplasmic side. Intramembrane regions (helical) lie at residues 177–189 (LLAT…LAAA) and 193–201 (PLAGILFII). The Cytoplasmic segment spans residues 202 to 214 (EEMRPQFRYTLIS). Residues 215 to 232 (IKAVFIGVIMSTIMYRIF) traverse the membrane as a helical segment. At 233 to 252 (NHEVALIDVGKLSDAPLNTL) the chain is on the periplasmic side. Residues 253–281 (WLYLILGIIFGIFGPIFNKWVLGMQDLLH) traverse the membrane as a helical segment. Topologically, residues 282-287 (RVHGGN) are cytoplasmic. Residues 288–309 (ITKWVLMGGAIGGLCGLLGFVA) form a helical membrane-spanning segment. Topologically, residues 310-329 (PATSGGGFNLIPIATAGNFS) are periplasmic. Helical transmembrane passes span 330 to 349 (MGML…LCFS) and 355 to 376 (GIFA…MVAV). The Selectivity filter part_3 signature appears at 355–359 (GIFAP). 2 residues coordinate chloride: Ile-356 and Phe-357. Residues 377-386 (ELFPQYHLEA) lie on the Periplasmic side of the membrane. Positions 387 to 401 (GTFAIAGMGALLAAS) form an intramembrane region, helical. The note=Loop between two helices intramembrane region spans 402–404 (IRA). The helical intramembrane region spans 405-416 (PLTGIILVLEMT). Positions 417–421 (DNYQL) form an intramembrane region, note=Loop between two helices. Residues 422-438 (ILPMIITGLGATLLAQF) traverse the membrane as a helical segment. The Cytoplasmic segment spans residues 439–473 (TGGKPLYSAILARTLAKQEAEQLARSKAASASENT). Residue Tyr-445 participates in chloride binding.

The protein belongs to the chloride channel (TC 2.A.49) family. ClcA subfamily. Homodimer.

It is found in the cell inner membrane. The catalysed reaction is 2 chloride(in) + H(+)(out) = 2 chloride(out) + H(+)(in). Its function is as follows. Proton-coupled chloride transporter. Functions as antiport system and exchanges two chloride ions for 1 proton. Probably acts as an electrical shunt for an outwardly-directed proton pump that is linked to amino acid decarboxylation, as part of the extreme acid resistance (XAR) response. This is H(+)/Cl(-) exchange transporter ClcA from Escherichia coli O139:H28 (strain E24377A / ETEC).